A 179-amino-acid chain; its full sequence is MSPEEYVRVWPDSGDLGGTELTLALPGTPTNASEGPKKFGNKRRFLETVDLKLGEAHENNYISSMVTNDQLVGWPPVATARKTVRRKYVKVALDGAAYLRKVDLGMYDCYGQLFTALENMFQGIITICRVTELERKGEFVATYEDKDGDLMLVGDVPWMMFVESCKRMRLMKTGDAIGL.

Positions 21–25 match the EAR-like (transcriptional repression) motif; sequence LTLAL. Residues 86–173 form the PB1 domain; sequence RKYVKVALDG…SCKRMRLMKT (88 aa).

Belongs to the Aux/IAA family. In terms of assembly, homodimers and heterodimers.

It localises to the nucleus. Aux/IAA proteins are short-lived transcriptional factors that function as repressors of early auxin response genes at low auxin concentrations. Repression is thought to result from the interaction with auxin response factors (ARFs), proteins that bind to the auxin-responsive promoter element (AuxRE). Formation of heterodimers with ARF proteins may alter their ability to modulate early auxin response genes expression. In Arabidopsis thaliana (Mouse-ear cress), this protein is Auxin-responsive protein IAA15 (IAA15).